The primary structure comprises 215 residues: uncharacterized protein (215 aa).

Disordered regions lie at residues 1–144 and 156–215; these read MPKG…PYLR and IQGH…GAPA. Low complexity-rich tracts occupy residues 16 to 29, 49 to 58, 85 to 96, and 104 to 127; these read ASTPSRSSWPASPT, SSSWPKSPIK, SGSSSPGPSSSR, and STAASSRSPATSARSTSSCPRAAP.

This is an uncharacterized protein from Homo sapiens (Human).